The primary structure comprises 269 residues: MEMO1 family protein TV1383 (269 aa).

The protein belongs to the MEMO1 family.

This Thermoplasma volcanium (strain ATCC 51530 / DSM 4299 / JCM 9571 / NBRC 15438 / GSS1) protein is MEMO1 family protein TV1383.